Reading from the N-terminus, the 151-residue chain is MASLLDKAKDFVADKLTAIPKPEGSVTDVDLKDVNRDSVEYLAKVSVTNPYSHSIPICEISFTFHSAGREIGKGKIPDPGSLKAKDMTALDIPVVVPYSILFNLARDVGVDWDIDYELQIGLTIDLPVVGEFTIPISSKGEIKLPTFKDFF.

Belongs to the LEA type 2 family.

This Arabidopsis thaliana (Mouse-ear cress) protein is Probable desiccation-related protein LEA14 (LEA14).